Reading from the N-terminus, the 501-residue chain is Lysine--tRNA ligase (501 aa).

Residues E411 and E418 each contribute to the Mg(2+) site.

It belongs to the class-II aminoacyl-tRNA synthetase family. Homodimer. The cofactor is Mg(2+).

Its subcellular location is the cytoplasm. The catalysed reaction is tRNA(Lys) + L-lysine + ATP = L-lysyl-tRNA(Lys) + AMP + diphosphate. In Pseudomonas aeruginosa (strain UCBPP-PA14), this protein is Lysine--tRNA ligase.